Reading from the N-terminus, the 565-residue chain is MEKTLLFAAIFLCVKADEICIGYLSNNSTDKVDTIIENNVTVTSSVELVETEHTGSFCSINGKQPISLGDCSFAGWILGNPMCDELIGKTSWSYIVEKPNPTNGICYPGTLESEEELRLKFSGVLEFNKFEVFTSNGWGAVNSGVGVTAACKFGGSNSFFRNMVWLIHQSGTYPVIKRTFNNTKGRDVLIVWGIHHPATLTEHQDLYKKDSSYVAVGSETYNRRFTPEINTRPRVNGQAGRMTFYWKIVKPGESITFESNGAFLAPRYAFEIVSVGNGKLFRSELNIESCSTKCQTEIGGINTNKSFHNVHRNTIGDCPKYVNVKSLKLATGPRNVPAIASRGLFGAIAGFIEGGWPGLINGWYGFQHRNEEGTGIAADKESTQKAIDQITSKVNNIVDRMNTNFESVQHEFSEIEERINQLSKHVDDSVVDIWSYNAQLLVLLENEKTLDLHDSNVRNLHEKVRRMLKDNAKDEGNGCFTFYHKCDNKCIERVRNGTYDHKEFEEESKINRQEIEGVKLDSSGNVYKILSIYSCIASSLVLAALIMGFMFWACSNGSCRCTICI.

The signal sequence occupies residues 1 to 16 (MEKTLLFAAIFLCVKA). Residues 17–531 (DEICIGYLSN…SSGNVYKILS (515 aa)) are Extracellular-facing. 6 disulfides stabilise this stretch: Cys-20–Cys-479, Cys-58–Cys-290, Cys-71–Cys-83, Cys-106–Cys-151, Cys-294–Cys-318, and Cys-486–Cys-490. Asn-26, Asn-27, and Asn-39 each carry an N-linked (GlcNAc...) asparagine; by host glycan. N-linked (GlcNAc...) asparagine; by host glycosylation is found at Asn-181 and Asn-304. N-linked (GlcNAc...) asparagine; by host glycosylation occurs at Asn-496. Residues 532-552 (IYSCIASSLVLAALIMGFMFW) form a helical membrane-spanning segment. Residues 553–565 (ACSNGSCRCTICI) are Cytoplasmic-facing. S-palmitoyl cysteine; by host attachment occurs at residues Cys-554, Cys-561, and Cys-564.

Belongs to the influenza viruses hemagglutinin family. Homotrimer of disulfide-linked HA1-HA2. Post-translationally, palmitoylated. In terms of processing, in natural infection, inactive HA is matured into HA1 and HA2 outside the cell by one or more trypsin-like, arginine-specific endoprotease secreted by the bronchial epithelial cells. One identified protease that may be involved in this process is secreted in lungs by club cells.

It localises to the virion membrane. The protein resides in the host apical cell membrane. Its function is as follows. Binds to sialic acid-containing receptors on the cell surface, bringing about the attachment of the virus particle to the cell. This attachment induces virion internalization of about two third of the virus particles through clathrin-dependent endocytosis and about one third through a clathrin- and caveolin-independent pathway. Plays a major role in the determination of host range restriction and virulence. Class I viral fusion protein. Responsible for penetration of the virus into the cell cytoplasm by mediating the fusion of the membrane of the endocytosed virus particle with the endosomal membrane. Low pH in endosomes induces an irreversible conformational change in HA2, releasing the fusion hydrophobic peptide. Several trimers are required to form a competent fusion pore. In terms of biological role, binds to sialic acid-containing receptors on the cell surface, bringing about the attachment of the virus particle to the cell. This attachment induces virion internalization either through clathrin-dependent endocytosis or through clathrin- and caveolin-independent pathway. Plays a major role in the determination of host range restriction and virulence. Class I viral fusion protein. Responsible for penetration of the virus into the cell cytoplasm by mediating the fusion of the membrane of the endocytosed virus particle with the endosomal membrane. Low pH in endosomes induces an irreversible conformational change in HA2, releasing the fusion hydrophobic peptide. Several trimers are required to form a competent fusion pore. This chain is Hemagglutinin, found in Influenza A virus (strain A/Duck/England/1/1956 H11N6).